The following is a 527-amino-acid chain: Peptide chain release factor 3 (527 aa).

The tr-type G domain maps to 9 to 277 (AKRRTFAIIS…AVVDWAPRPL (269 aa)). GTP contacts are provided by residues 18–25 (SHPDAGKT), 86–90 (DTPGH), and 140–143 (NKLD).

The protein belongs to the TRAFAC class translation factor GTPase superfamily. Classic translation factor GTPase family. PrfC subfamily.

The protein localises to the cytoplasm. Functionally, increases the formation of ribosomal termination complexes and stimulates activities of RF-1 and RF-2. It binds guanine nucleotides and has strong preference for UGA stop codons. It may interact directly with the ribosome. The stimulation of RF-1 and RF-2 is significantly reduced by GTP and GDP, but not by GMP. This chain is Peptide chain release factor 3, found in Pseudomonas fluorescens (strain Pf0-1).